The sequence spans 623 residues: ATP-dependent lipid A-core flippase (623 aa).

A run of 5 helical transmembrane segments spans residues 66–86 (LVLA…LAVI), 103–123 (VWFL…CNFF), 190–210 (LVVI…TLII), 290–310 (LTPL…AVAL), and 317–337 (ALTV…FDPI). The 283-residue stretch at 67 to 349 (VLAVLLMAGA…LTNLAGKMQK (283 aa)) folds into the ABC transmembrane type-1 domain. An ABC transporter domain is found at 382–618 (VEFRAVSHRF…NGLYASLYNM (237 aa)). 416 to 423 (GRSGSGKT) is an ATP binding site.

The protein belongs to the ABC transporter superfamily. Lipid exporter (TC 3.A.1.106) family. In terms of assembly, homodimer.

It is found in the cell inner membrane. It catalyses the reaction ATP + H2O + lipid A-core oligosaccharideSide 1 = ADP + phosphate + lipid A-core oligosaccharideSide 2.. In terms of biological role, involved in lipopolysaccharide (LPS) biosynthesis. Translocates lipid A-core from the inner to the outer leaflet of the inner membrane. Transmembrane domains (TMD) form a pore in the inner membrane and the ATP-binding domain (NBD) is responsible for energy generation. In Bordetella pertussis (strain Tohama I / ATCC BAA-589 / NCTC 13251), this protein is ATP-dependent lipid A-core flippase.